The following is a 398-amino-acid chain: uncharacterized protein (398 aa).

The region spanning 240–306 (SLNKNIDQLI…SITVTTNDGS (67 aa)) is the BIG2 domain.

This is an uncharacterized protein from Clostridium acetobutylicum (strain ATCC 824 / DSM 792 / JCM 1419 / IAM 19013 / LMG 5710 / NBRC 13948 / NRRL B-527 / VKM B-1787 / 2291 / W).